The sequence spans 120 residues: MTTPTTLKYAASHEWLSEDGTVGITDHAQEQLGDVVYVELPEVGREVTAGEAVAVVESVKTASDIYAPASGRIVAVNEELSGNPELVNSAPYEGGWLFKLEVTEEGSDLLDAAAYDAQAH.

In terms of domain architecture, Lipoyl-binding spans 19–101; the sequence is DGTVGITDHA…YEGGWLFKLE (83 aa). The residue at position 60 (K60) is an N6-lipoyllysine.

The protein belongs to the GcvH family. The glycine cleavage system is composed of four proteins: P, T, L and H. (R)-lipoate is required as a cofactor.

Functionally, the glycine cleavage system catalyzes the degradation of glycine. The H protein shuttles the methylamine group of glycine from the P protein to the T protein. This is Glycine cleavage system H protein from Deinococcus deserti (strain DSM 17065 / CIP 109153 / LMG 22923 / VCD115).